Reading from the N-terminus, the 242-residue chain is Ribonuclease PH (242 aa).

Residues R86 and 124–126 (GTR) contribute to the phosphate site.

The protein belongs to the RNase PH family. As to quaternary structure, homohexameric ring arranged as a trimer of dimers.

It catalyses the reaction tRNA(n+1) + phosphate = tRNA(n) + a ribonucleoside 5'-diphosphate. Phosphorolytic 3'-5' exoribonuclease that plays an important role in tRNA 3'-end maturation. Removes nucleotide residues following the 3'-CCA terminus of tRNAs; can also add nucleotides to the ends of RNA molecules by using nucleoside diphosphates as substrates, but this may not be physiologically important. Probably plays a role in initiation of 16S rRNA degradation (leading to ribosome degradation) during starvation. In Bacillus pumilus (strain SAFR-032), this protein is Ribonuclease PH.